The chain runs to 1392 residues: DNA-directed RNA polymerase subunit beta'' (1392 aa).

4 residues coordinate Zn(2+): C224, C295, C302, and C305.

The protein belongs to the RNA polymerase beta' chain family. RpoC2 subfamily. In plastids the minimal PEP RNA polymerase catalytic core is composed of four subunits: alpha, beta, beta', and beta''. When a (nuclear-encoded) sigma factor is associated with the core the holoenzyme is formed, which can initiate transcription. It depends on Zn(2+) as a cofactor.

Its subcellular location is the plastid. The protein localises to the chloroplast. The enzyme catalyses RNA(n) + a ribonucleoside 5'-triphosphate = RNA(n+1) + diphosphate. Its function is as follows. DNA-dependent RNA polymerase catalyzes the transcription of DNA into RNA using the four ribonucleoside triphosphates as substrates. This is DNA-directed RNA polymerase subunit beta'' from Nicotiana tomentosiformis (Tobacco).